The following is a 242-amino-acid chain: Basic agglutinin (242 aa).

N45 and N220 each carry an N-linked (GlcNAc...) asparagine glycan.

It belongs to the leguminous lectin family.

In terms of biological role, lectin. This chain is Basic agglutinin (WBAI), found in Psophocarpus tetragonolobus (Winged bean).